We begin with the raw amino-acid sequence, 280 residues long: 2-C-methyl-D-erythritol 4-phosphate cytidylyltransferase (280 aa).

This sequence belongs to the IspD/TarI cytidylyltransferase family. IspD subfamily.

The enzyme catalyses 2-C-methyl-D-erythritol 4-phosphate + CTP + H(+) = 4-CDP-2-C-methyl-D-erythritol + diphosphate. It functions in the pathway isoprenoid biosynthesis; isopentenyl diphosphate biosynthesis via DXP pathway; isopentenyl diphosphate from 1-deoxy-D-xylulose 5-phosphate: step 2/6. Functionally, catalyzes the formation of 4-diphosphocytidyl-2-C-methyl-D-erythritol from CTP and 2-C-methyl-D-erythritol 4-phosphate (MEP). This Psychrobacter cryohalolentis (strain ATCC BAA-1226 / DSM 17306 / VKM B-2378 / K5) protein is 2-C-methyl-D-erythritol 4-phosphate cytidylyltransferase.